Consider the following 484-residue polypeptide: MERQVLRLRQAFRSGRSRPLRFRLQQLEALRRMVQEREKEILAAIAADLSKSELNAYSHEVITILGEIDFMLGNLPELASARPAKKNLLTMMDEAYVQPEPLGVVLIIGAWNYPFVLTMQPLVGAIAAGNAAIVKPSELSENTAKILAELLPQYLDQDLYAIVNGGIPETTELLKQRFDHILYTGNTAVGKIVMEAAAKHLTPVTLELGGKSPCYIDRDCDLDVACRRIAWGKYMNCGQTCIAPDYILCEASLQNQIVQKIKETVKDFYGENIKASPDYERIINLRHFKRLQSLLKGQKIAFGGEMDEATRYLAPTILTDVDPNSKVMQEEIFGPILPIVSVKNVDEAINFINDREKPLALYVFSRNNKLIKRVIDETSSGGVTGNDVIMHFTVNSLPFGGVGASGMGAYHGKYSFDTFSHQRPCLLKGLKGESVNKLRYPPNSESKVSWAKFFLLKQFNKGRLGMLLFVCLVAVAAVIVKDQL.

At 1 to 463 (MERQVLRLRQ…FLLKQFNKGR (463 aa)) the chain is on the cytoplasmic side. 185–190 (GNTAVG) is an NAD(+) binding site. Active-site residues include Glu207 and Cys241. Residue Ser293 is modified to Phosphoserine. A helical transmembrane segment spans residues 464 to 484 (LGMLLFVCLVAVAAVIVKDQL). The Prevents secretion from ER signature appears at 481–484 (KDQL).

The protein belongs to the aldehyde dehydrogenase family. In terms of assembly, homodimer.

Its subcellular location is the membrane. The protein resides in the microsome membrane. It localises to the endoplasmic reticulum membrane. It catalyses the reaction an aldehyde + NAD(+) + H2O = a carboxylate + NADH + 2 H(+). The enzyme catalyses a fatty aldehyde + NAD(+) + H2O = a fatty acid + NADH + 2 H(+). The catalysed reaction is hexadecanoate + NADH + 2 H(+) = hexadecanal + NAD(+) + H2O. It carries out the reaction octanal + NAD(+) + H2O = octanoate + NADH + 2 H(+). It catalyses the reaction (2E)-hexadecenal + NAD(+) + H2O = (E)-hexadec-2-enoate + NADH + 2 H(+). The enzyme catalyses 22-oxodocosanoate + NAD(+) + H2O = docosanedioate + NADH + 2 H(+). The catalysed reaction is 2,6,10,14-tetramethylpentadecanal + NAD(+) + H2O = 2,6,10,14-tetramethylpentadecanoate + NADH + 2 H(+). It carries out the reaction octadecanal + NAD(+) + H2O = octadecanoate + NADH + 2 H(+). It catalyses the reaction dodecanoate + NADH + 2 H(+) = dodecanal + NAD(+) + H2O. The enzyme catalyses decanal + NAD(+) + H2O = decanoate + NADH + 2 H(+). The catalysed reaction is tetradecanal + NAD(+) + H2O = tetradecanoate + NADH + 2 H(+). It carries out the reaction heptanal + NAD(+) + H2O = heptanoate + NADH + 2 H(+). It catalyses the reaction (2E,6E)-farnesal + NAD(+) + H2O = (2E,6E)-farnesoate + NADH + 2 H(+). Its function is as follows. Catalyzes the oxidation of medium and long-chain aliphatic aldehydes to fatty acids. Active on a variety of saturated and unsaturated aliphatic aldehydes between 6 and 24 carbons in length. Responsible for conversion of the sphingosine 1-phosphate (S1P) degradation product hexadecenal to hexadecenoic acid. The protein is Aldehyde dehydrogenase family 3 member A2 (Aldh3a2) of Mus musculus (Mouse).